Consider the following 512-residue polypeptide: Eukaryotic translation initiation factor 3 subunit L (512 aa).

The PCI domain maps to 291-477 (DAFRLFESIL…GERQFTDSVD (187 aa)).

The protein belongs to the eIF-3 subunit L family. In terms of assembly, component of the eukaryotic translation initiation factor 3 (eIF-3) complex.

Its subcellular location is the cytoplasm. Component of the eukaryotic translation initiation factor 3 (eIF-3) complex, which is involved in protein synthesis of a specialized repertoire of mRNAs and, together with other initiation factors, stimulates binding of mRNA and methionyl-tRNAi to the 40S ribosome. The eIF-3 complex specifically targets and initiates translation of a subset of mRNAs involved in cell proliferation. In Monosiga brevicollis (Choanoflagellate), this protein is Eukaryotic translation initiation factor 3 subunit L.